A 347-amino-acid chain; its full sequence is Protein phosphatase 1 regulatory subunit 3G (347 aa).

The interval 1 to 77 (MDPSGEQLHR…ELQEYRRSRA (77 aa)) is disordered. Residues 13-22 (ASSSTSSGDP) show a composition bias toward polar residues. A Phosphoserine modification is found at serine 81. One can recognise a CBM21 domain in the interval 200–339 (EERLRRQRVC…NNEGANYTLR (140 aa)). Positions 258–286 (DPESVEPLPPLQSGDSGSKAEDSEEGPGT) are disordered.

Glycogen-targeting subunit for protein phosphatase 1 (PP1). Involved in the regulation of hepatic glycogenesis in a manner coupled to the fasting-feeding cycle and distinct from other glycogen-targeting subunits. This chain is Protein phosphatase 1 regulatory subunit 3G (Ppp1r3g), found in Mus musculus (Mouse).